Consider the following 408-residue polypeptide: LL-diaminopimelate aminotransferase (408 aa).

2 residues coordinate substrate: tyrosine 15 and glycine 42. Pyridoxal 5'-phosphate is bound by residues tyrosine 72, 108 to 109 (SK), tyrosine 132, asparagine 187, tyrosine 218, and 246 to 248 (SFS). Substrate is bound by residues lysine 109, tyrosine 132, and asparagine 187. Position 249 is an N6-(pyridoxal phosphate)lysine (lysine 249). Pyridoxal 5'-phosphate contacts are provided by arginine 257 and asparagine 292. 2 residues coordinate substrate: asparagine 292 and arginine 388.

Belongs to the class-I pyridoxal-phosphate-dependent aminotransferase family. LL-diaminopimelate aminotransferase subfamily. In terms of assembly, homodimer. The cofactor is pyridoxal 5'-phosphate.

It carries out the reaction (2S,6S)-2,6-diaminopimelate + 2-oxoglutarate = (S)-2,3,4,5-tetrahydrodipicolinate + L-glutamate + H2O + H(+). It functions in the pathway amino-acid biosynthesis; L-lysine biosynthesis via DAP pathway; LL-2,6-diaminopimelate from (S)-tetrahydrodipicolinate (aminotransferase route): step 1/1. Functionally, involved in the synthesis of meso-diaminopimelate (m-DAP or DL-DAP), required for both lysine and peptidoglycan biosynthesis. Catalyzes the direct conversion of tetrahydrodipicolinate to LL-diaminopimelate. This chain is LL-diaminopimelate aminotransferase, found in Prochlorococcus marinus (strain MIT 9301).